Here is a 5209-residue protein sequence, read N- to C-terminus: E3 ubiquitin-protein ligase rnf213-alpha (5209 aa).

Polar residues-rich tracts occupy residues 27-52 and 61-72; these read SQSY…QITN and ESKSLEIQNANV. Positions 27–373 are disordered; the sequence is SQSYETTQGT…KRNTRSTQHI (347 aa). A compositionally biased stretch (basic residues) spans 85-101; the sequence is PKKKKRKKRKKEKKKKS. The segment covering 108–118 has biased composition (low complexity); that stretch reads SSLTSDLSDIS. Residues 119-128 are compositionally biased toward basic and acidic residues; the sequence is LTDKEKKMDT. 2 stretches are compositionally biased toward polar residues: residues 167-177 and 184-195; these read LSASALTTGSS and IGTTQKPVSASA. Over residues 205 to 218 the composition is skewed to basic and acidic residues; it reads QTKEEKVKCKDEGQ. Polar residues predominate over residues 219-243; the sequence is KSLSAKAQHTPNANVDQNANVQSDA. The span at 256–269 shows a compositional bias: low complexity; sequence KSSSVKTKPSKSTV. Basic and acidic residues-rich tracts occupy residues 271–288 and 330–352; these read DPKK…RDNE and MKVE…SKES. Residues 2036 to 2041, glutamate 2135, aspartate 2193, arginine 2252, lysine 2535, and serine 2610 each bind ATP; that span reads GVGKSL. The Zn(2+) site is built by cysteine 4005, cysteine 4008, cysteine 4020, histidine 4022, cysteine 4025, cysteine 4028, cysteine 4040, cysteine 4043, cysteine 4507, and histidine 4511. An RING-type zinc finger spans residues 4005-4043; that stretch reads CPVCMGDPRDPLSLPCDHIYCLTCIRQWLVPGQMHCPLC. An RZ-type zinc finger spans residues 4487 to 4557; sequence MPDDMLAVAQ…MQIQADRTQS (71 aa). Cysteine 4518 serves as the catalytic Nucleophile; for E3 ubiquitin-lipopolysaccharide ligase activity. Positions 4527 and 4530 each coordinate Zn(2+).

It belongs to the AAA ATPase family.

It is found in the cytoplasm. The protein resides in the cytosol. The protein localises to the lipid droplet. It carries out the reaction S-ubiquitinyl-[E2 ubiquitin-conjugating enzyme]-L-cysteine + [acceptor protein]-L-lysine = [E2 ubiquitin-conjugating enzyme]-L-cysteine + N(6)-ubiquitinyl-[acceptor protein]-L-lysine.. It catalyses the reaction ATP + H2O = ADP + phosphate + H(+). It functions in the pathway protein modification; protein ubiquitination. Atypical E3 ubiquitin ligase that can catalyze ubiquitination of both proteins and lipids, and which is involved in various processes, such as lipid metabolism, angiogenesis and cell-autonomous immunity. Acts as a key immune sensor by catalyzing ubiquitination of the lipid A moiety of bacterial lipopolysaccharide (LPS) via its RZ-type zinc-finger: restricts the proliferation of cytosolic bacteria, such as Salmonella, by generating the bacterial ubiquitin coat through the ubiquitination of LPS. Ubiquitination of LPS triggers cell-autonomous immunity, such as antibacterial autophagy, leading to degradation of the microbial invader. Involved in lipid metabolism by regulating fat storage and lipid droplet formation; act by inhibiting the lipolytic process. Also regulates lipotoxicity by inhibiting desaturation of fatty acids. Also acts as an E3 ubiquitin-protein ligase via its RING-type zinc finger. Involved in the non-canonical Wnt signaling pathway in vascular development: acts by mediating ubiquitination and degradation of proteins downstream of rspo3, leading to inhibit the non-canonical Wnt signaling pathway and promoting vessel regression. Also has ATPase activity; ATPase activity is required for ubiquitination of LPS. Also involved in neuromuscular regulation. The chain is E3 ubiquitin-protein ligase rnf213-alpha from Danio rerio (Zebrafish).